The primary structure comprises 100 residues: MAEMKTDAATLAQEAGNFERISGDLKTQIDQVESTAGSLQGQWRGAAGTAAQAAVVRFQEAANKQKQELDEISTNIRQAGVQYSRADEEQQQALSSQMGF.

Residues 49–86 (TAAQAAVVRFQEAANKQKQELDEISTNIRQAGVQYSRA) adopt a coiled-coil conformation. Residues 81–100 (VQYSRADEEQQQALSSQMGF) are disordered. The segment covering 91 to 100 (QQALSSQMGF) has biased composition (polar residues).

It belongs to the WXG100 family. CFP-10 subfamily. In terms of assembly, forms a tight 1:1 complex with EsxA (ESAT-6).

It localises to the secreted. A secreted protein. Acts as a strong host T-cell antigen. Involved in translocation of bacteria from the host (human) phagolysosome to the host cytoplasm. Might serve as a chaperone to prevent uncontrolled membrane lysis by its partner EsxA. This chain is ESAT-6-like protein EsxB (esxB), found in Mycobacterium bovis (strain ATCC BAA-935 / AF2122/97).